We begin with the raw amino-acid sequence, 404 residues long: Sialidase (404 aa).

A signal peptide spans 1-27; the sequence is MKKFIKILKVLSMAIVLSACNINGIFA. Arg-55 contacts substrate. Asp-80 acts as the Proton acceptor in catalysis. BNR repeat units lie at residues 89-100, 158-169, and 226-237; these read AKSTDNGQTWDY, VYSDDNGETWSD, and IYSKDNGETWTM. Arg-263 serves as a coordination point for substrate. One copy of the BNR 4 repeat lies at 273 to 284; the sequence is YISYDMGSTWEV. Residue Tyr-365 is the Nucleophile of the active site.

The protein belongs to the glycosyl hydrolase 33 family. It is possible that the sialidase is cleaved in front of a cysteine within the leader peptide, forming a glyceride thioether bond which links the protein to the membrane. A second proteolytic cleavage releases the mature extracellular protein.

The protein localises to the secreted. The enzyme catalyses Hydrolysis of alpha-(2-&gt;3)-, alpha-(2-&gt;6)-, alpha-(2-&gt;8)- glycosidic linkages of terminal sialic acid residues in oligosaccharides, glycoproteins, glycolipids, colominic acid and synthetic substrates.. Its function is as follows. Sialidases have been suggested to be pathogenic factors in microbial infections. The polypeptide is Sialidase (Paraclostridium sordellii (Clostridium sordellii)).